Reading from the N-terminus, the 366-residue chain is D-alanine--D-alanine ligase (366 aa).

The ATP-grasp domain occupies 148–357; it reads KMTFEQAGLA…FPELVDRLIQ (210 aa). 184 to 239 lines the ATP pocket; the sequence is EAALGYPAFVKPANLGSSVGIAKVRSRQELEAALDNAASYDRRLVVEAGVVAREVE. Mg(2+)-binding residues include Asp310, Glu324, and Asn326.

This sequence belongs to the D-alanine--D-alanine ligase family. Mg(2+) serves as cofactor. Mn(2+) is required as a cofactor.

The protein localises to the cytoplasm. The enzyme catalyses 2 D-alanine + ATP = D-alanyl-D-alanine + ADP + phosphate + H(+). Its pathway is cell wall biogenesis; peptidoglycan biosynthesis. Its function is as follows. Cell wall formation. This Nostoc punctiforme (strain ATCC 29133 / PCC 73102) protein is D-alanine--D-alanine ligase.